The primary structure comprises 43 residues: Protein PsbN (43 aa).

A helical transmembrane segment spans residues 7 to 27; sequence IAISISGLLVSFTGYALYIAF.

It belongs to the PsbN family.

It localises to the plastid. The protein localises to the chloroplast thylakoid membrane. In terms of biological role, may play a role in photosystem I and II biogenesis. The sequence is that of Protein PsbN from Glycine max (Soybean).